A 138-amino-acid polypeptide reads, in one-letter code: Prefoldin subunit alpha (138 aa).

The protein belongs to the prefoldin subunit alpha family. In terms of assembly, heterohexamer of two alpha and four beta subunits.

It is found in the cytoplasm. Its function is as follows. Molecular chaperone capable of stabilizing a range of proteins. Seems to fulfill an ATP-independent, HSP70-like function in archaeal de novo protein folding. The polypeptide is Prefoldin subunit alpha (Methanosphaera stadtmanae (strain ATCC 43021 / DSM 3091 / JCM 11832 / MCB-3)).